The chain runs to 163 residues: ATP synthase subunit b', chloroplastic (163 aa).

Residues 26–46 form a helical membrane-spanning segment; that stretch reads ATLPLMALQFILLTVILTFVF.

The protein belongs to the ATPase B chain family. As to quaternary structure, F-type ATPases have 2 components, F(1) - the catalytic core - and F(0) - the membrane proton channel. F(1) has five subunits: alpha(3), beta(3), gamma(1), delta(1), epsilon(1). F(0) has four main subunits: a(1), b(1), b'(1) and c(10-14). The alpha and beta chains form an alternating ring which encloses part of the gamma chain. F(1) is attached to F(0) by a central stalk formed by the gamma and epsilon chains, while a peripheral stalk is formed by the delta, b and b' chains.

It is found in the plastid. The protein resides in the chloroplast thylakoid membrane. F(1)F(0) ATP synthase produces ATP from ADP in the presence of a proton or sodium gradient. F-type ATPases consist of two structural domains, F(1) containing the extramembraneous catalytic core and F(0) containing the membrane proton channel, linked together by a central stalk and a peripheral stalk. During catalysis, ATP synthesis in the catalytic domain of F(1) is coupled via a rotary mechanism of the central stalk subunits to proton translocation. Its function is as follows. Component of the F(0) channel, it forms part of the peripheral stalk, linking F(1) to F(0). The b'-subunit is a diverged and duplicated form of b found in plants and photosynthetic bacteria. This Ochrosphaera neapolitana protein is ATP synthase subunit b', chloroplastic.